Here is a 155-residue protein sequence, read N- to C-terminus: Probable methanogenesis regulatory protein FilR2 (155 aa).

In terms of domain architecture, Response regulatory spans 18–142; the sequence is IILLVEDNNA…DLKRTVEEIK (125 aa). Asp75 bears the 4-aspartylphosphate mark.

In terms of processing, phosphorylated by FilI.

Functionally, member of the two-component regulatory system FilI/FilRs, which is involved in the regulation of methanogenesis. In Methanothrix harundinacea (strain 6Ac) (Methanosaeta harundinacea), this protein is Probable methanogenesis regulatory protein FilR2.